The following is a 152-amino-acid chain: Regulatory protein RecX (152 aa).

Belongs to the RecX family.

Its subcellular location is the cytoplasm. Modulates RecA activity. The polypeptide is Regulatory protein RecX (Chromohalobacter salexigens (strain ATCC BAA-138 / DSM 3043 / CIP 106854 / NCIMB 13768 / 1H11)).